Consider the following 171-residue polypeptide: Transcriptional repressor NrdR (171 aa).

Over residues 1–10 (MQCPHCHHNG) the composition is skewed to basic residues. Residues 1–21 (MQCPHCHHNGSRVVDSRPTDD) are disordered. A zinc finger spans residues 3–34 (CPHCHHNGSRVVDSRPTDDGRVIRRRRECENC). In terms of domain architecture, ATP-cone spans 49 to 139 (LLVIKKNGAR…VYRQFKDMHV (91 aa)). A disordered region spans residues 152 to 171 (KVKLAKPSAKTTHAPKRKKD).

The protein belongs to the NrdR family. Requires Zn(2+) as cofactor.

Negatively regulates transcription of bacterial ribonucleotide reductase nrd genes and operons by binding to NrdR-boxes. This chain is Transcriptional repressor NrdR, found in Lactiplantibacillus plantarum (strain ATCC BAA-793 / NCIMB 8826 / WCFS1) (Lactobacillus plantarum).